We begin with the raw amino-acid sequence, 239 residues long: uncharacterized protein (239 aa).

This is an uncharacterized protein from Edwardsiella ictaluri (strain 93-146).